We begin with the raw amino-acid sequence, 210 residues long: Large ribosomal subunit protein uL4 (210 aa).

Part of the 50S ribosomal subunit. Post-translationally, the N-terminus is blocked.

Its function is as follows. One of the primary rRNA binding proteins, this protein initially binds near the 5'-end of the 23S rRNA. It is important during the early stages of 50S assembly. It makes multiple contacts with different domains of the 23S rRNA in the assembled 50S subunit and ribosome. Forms part of the polypeptide exit tunnel. In terms of biological role, this protein can be incorporated into E.coli ribosomes in vivo, which resulted in decreased peptidyltransferase (Ptase) activity of the hybrid ribosomes. The hybrid 50S subunits associate less well with 30S subunits to form the ribosome. The protein is Large ribosomal subunit protein uL4 (rplD) of Thermus thermophilus (strain ATCC 27634 / DSM 579 / HB8).